A 276-amino-acid chain; its full sequence is Ribosomal RNA small subunit methyltransferase A (276 aa).

S-adenosyl-L-methionine contacts are provided by asparagine 27, leucine 29, glycine 54, glutamate 75, aspartate 101, and asparagine 123.

Belongs to the class I-like SAM-binding methyltransferase superfamily. rRNA adenine N(6)-methyltransferase family. RsmA subfamily.

It is found in the cytoplasm. The catalysed reaction is adenosine(1518)/adenosine(1519) in 16S rRNA + 4 S-adenosyl-L-methionine = N(6)-dimethyladenosine(1518)/N(6)-dimethyladenosine(1519) in 16S rRNA + 4 S-adenosyl-L-homocysteine + 4 H(+). Functionally, specifically dimethylates two adjacent adenosines (A1518 and A1519) in the loop of a conserved hairpin near the 3'-end of 16S rRNA in the 30S particle. May play a critical role in biogenesis of 30S subunits. In Bartonella bacilliformis (strain ATCC 35685 / KC583 / Herrer 020/F12,63), this protein is Ribosomal RNA small subunit methyltransferase A.